The primary structure comprises 129 residues: uncharacterized protein (129 aa).

An N-terminal signal peptide occupies residues 1 to 24; the sequence is MAFGWHSMHGSIIWFLQIAQLSTA. Transmembrane regions (helical) follow at residues 38–58 and 95–115; these read ISNLFFLVSTGALWFELCAIF and IAHIEAHTSIVGFMISLFTPL.

Its subcellular location is the membrane. This is an uncharacterized protein from Saccharomyces cerevisiae (strain ATCC 204508 / S288c) (Baker's yeast).